Here is a 337-residue protein sequence, read N- to C-terminus: Tryptophan--tRNA ligase (337 aa).

ATP-binding positions include 11 to 13 (QPT) and 19 to 20 (GN). A 'HIGH' region motif is present at residues 12–20 (PTGALHLGN). Residue D135 participates in L-tryptophan binding. ATP is bound by residues 147 to 149 (GED), V191, and 200 to 204 (KMSKS). Residues 200 to 204 (KMSKS) carry the 'KMSKS' region motif.

Belongs to the class-I aminoacyl-tRNA synthetase family. As to quaternary structure, homodimer.

It is found in the cytoplasm. The catalysed reaction is tRNA(Trp) + L-tryptophan + ATP = L-tryptophyl-tRNA(Trp) + AMP + diphosphate + H(+). Catalyzes the attachment of tryptophan to tRNA(Trp). In Parasynechococcus marenigrum (strain WH8102), this protein is Tryptophan--tRNA ligase.